The following is a 335-amino-acid chain: RNA polymerase sigma factor RpoS (335 aa).

Residues 57-90 form a sigma-70 factor domain-1 region; it reads DATQMYLSEIGFSPLLTAEEEVLYARRALRGDEA. The tract at residues 95–165 is sigma-70 factor domain-2; that stretch reads MIESNLRLVV…ERALMNQTRT (71 aa). The Interaction with polymerase core subunit RpoC motif lies at 119 to 122; that stretch reads DLIE. The tract at residues 175–250 is sigma-70 factor domain-3; it reads ELNIYLRTAR…DSHNADPEFS (76 aa). Residues 263–316 are sigma-70 factor domain-4; that stretch reads WLDELNPKQKEVLARRFGLLGYEPSTLEEVGREINLTRERVRQIQVEGLRRLRE. The segment at residues 289–308 is a DNA-binding region (H-T-H motif); that stretch reads LEEVGREINLTRERVRQIQV.

Belongs to the sigma-70 factor family. RpoS subfamily. In terms of assembly, interacts with the RNA polymerase core enzyme.

Its subcellular location is the cytoplasm. Its function is as follows. Sigma factors are initiation factors that promote the attachment of RNA polymerase to specific initiation sites and are then released. This sigma factor is the master transcriptional regulator of the stationary phase and the general stress response. May be required for the persistence of V.cholerae in aquatic habitats. The protein is RNA polymerase sigma factor RpoS of Vibrio cholerae serotype O1 (strain ATCC 39315 / El Tor Inaba N16961).